The following is a 205-amino-acid chain: Holliday junction branch migration complex subunit RuvA (205 aa).

Residues 1–64 are domain I; it reads MIGRLRGVLI…EDAQLLYGFI (64 aa). The interval 65–143 is domain II; that stretch reads TKQERSLFRL…SLMEASVGSE (79 aa). A flexible linker region spans residues 144-156; it reads REFVLQSNYSPAP. The tract at residues 157–205 is domain III; sequence TVNSAEEDAISALISLGYKPPQASKAVSAAYKEGMDSETLIKAALKSML.

It belongs to the RuvA family. As to quaternary structure, homotetramer. Forms an RuvA(8)-RuvB(12)-Holliday junction (HJ) complex. HJ DNA is sandwiched between 2 RuvA tetramers; dsDNA enters through RuvA and exits via RuvB. An RuvB hexamer assembles on each DNA strand where it exits the tetramer. Each RuvB hexamer is contacted by two RuvA subunits (via domain III) on 2 adjacent RuvB subunits; this complex drives branch migration. In the full resolvosome a probable DNA-RuvA(4)-RuvB(12)-RuvC(2) complex forms which resolves the HJ.

It is found in the cytoplasm. In terms of biological role, the RuvA-RuvB-RuvC complex processes Holliday junction (HJ) DNA during genetic recombination and DNA repair, while the RuvA-RuvB complex plays an important role in the rescue of blocked DNA replication forks via replication fork reversal (RFR). RuvA specifically binds to HJ cruciform DNA, conferring on it an open structure. The RuvB hexamer acts as an ATP-dependent pump, pulling dsDNA into and through the RuvAB complex. HJ branch migration allows RuvC to scan DNA until it finds its consensus sequence, where it cleaves and resolves the cruciform DNA. In Shewanella sp. (strain MR-7), this protein is Holliday junction branch migration complex subunit RuvA.